The sequence spans 167 residues: UPF0336 protein MAP_4109 (167 aa).

Residues 21–124 (GREQLRQFAL…RFGADIVVTK (104 aa)) form the MaoC-like domain.

Belongs to the UPF0336 family.

The sequence is that of UPF0336 protein MAP_4109 from Mycolicibacterium paratuberculosis (strain ATCC BAA-968 / K-10) (Mycobacterium paratuberculosis).